Here is a 239-residue protein sequence, read N- to C-terminus: Ribonuclease 3 (239 aa).

Positions 18–141 (YLTLEKALGY…LMAGVYLEAG (124 aa)) constitute an RNase III domain. Mg(2+) is bound at residue glutamate 54. Aspartate 58 is an active-site residue. Serine 127 and glutamate 130 together coordinate Mg(2+). Glutamate 130 is a catalytic residue. The DRBM domain occupies 168–237 (DYKTALQELT…AYQALQKLKE (70 aa)).

Belongs to the ribonuclease III family. Homodimer. Requires Mg(2+) as cofactor.

Its subcellular location is the cytoplasm. It catalyses the reaction Endonucleolytic cleavage to 5'-phosphomonoester.. Digests double-stranded RNA. Involved in the processing of primary rRNA transcript to yield the immediate precursors to the large and small rRNAs (23S and 16S). Processes some mRNAs, and tRNAs when they are encoded in the rRNA operon. Processes pre-crRNA and tracrRNA of type II CRISPR loci if present in the organism. This is Ribonuclease 3 from Helicobacter pylori (strain P12).